The following is a 28-amino-acid chain: Expansin-B1 (28 aa).

The Expansin-like CBD domain maps to 11 to 28; that stretch reads MLLSLQGPXSLRMVSESG.

The protein belongs to the expansin family. Expansin B subfamily.

It localises to the secreted. Its subcellular location is the cell wall. The protein localises to the membrane. In terms of biological role, may cause loosening and extension of plant cell walls by disrupting non-covalent bonding between cellulose microfibrils and matrix glucans. This chain is Expansin-B1, found in Pseudotsuga menziesii (Douglas-fir).